A 346-amino-acid chain; its full sequence is Golgi to ER traffic protein 4 (346 aa).

Residues glycine 317 to aspartate 346 are disordered. Residues glycine 321–threonine 335 are compositionally biased toward polar residues.

The protein belongs to the GET4 family. Component of the get4/get5/sgt2 sorting complex.

The protein localises to the cytoplasm. Its function is as follows. Component of the get4/get5/sgt2 sorting complex involved in the GET (guided entry of TA proteins) pathway that leads to the insertion of tail-anchored (TA) proteins into the endoplasmic reticulum. Get4 and get5 form an obligate complex that catalyzes the transfer of tail-anchored proteins destined to the endoplasmic reticulum from sgt2 to the cytosolic targeting factor which then targets the TA protein to the ER membrane via get1/get2. This chain is Golgi to ER traffic protein 4, found in Aspergillus fumigatus (strain ATCC MYA-4609 / CBS 101355 / FGSC A1100 / Af293) (Neosartorya fumigata).